A 626-amino-acid polypeptide reads, in one-letter code: ATP-dependent RNA helicase dbp-8 (626 aa).

Low complexity predominate over residues 1-25 (MPSATAAKAKKANANANLKSKVNKA). Residues 1–183 (MPSATAAKAK…ATPALPVPEP (183 aa)) are disordered. The segment covering 40-98 (DESDFGSELDVEDESAASDEEDEDEDEDEHDLEEGVSDEGEGVSDEEEGVSDEDEDEEN) has biased composition (acidic residues). Over residues 161-173 (KQAEAPKTEKTEE) the composition is skewed to basic and acidic residues. Positions 195 to 223 (TTFDALNVRPWLVQSLANMAIKRPTGIQK) match the Q motif motif. The Helicase ATP-binding domain maps to 226–406 (IPEILKGRDC…ERPPIPGRAP (181 aa)). 239 to 246 (SRTGSGKT) is an ATP binding site. Residues 348–351 (DEAD) carry the DEAD box motif. Residues 438–589 (YLHMFLLTPQ…GVNLETRVIR (152 aa)) form the Helicase C-terminal domain.

This sequence belongs to the DEAD box helicase family. DDX49/DBP8 subfamily.

The protein resides in the nucleus. It is found in the nucleolus. It catalyses the reaction ATP + H2O = ADP + phosphate + H(+). Its function is as follows. ATP-binding RNA helicase involved in 40S ribosomal subunit biogenesis and is required for the normal formation of 18S rRNAs through pre-rRNA processing at A0, A1 and A2 sites. Required for vegetative growth. The protein is ATP-dependent RNA helicase dbp-8 (dbp-8) of Neurospora crassa (strain ATCC 24698 / 74-OR23-1A / CBS 708.71 / DSM 1257 / FGSC 987).